A 147-amino-acid polypeptide reads, in one-letter code: UPF0306 protein YhbP (147 aa).

Belongs to the UPF0306 family.

In Escherichia coli O1:K1 / APEC, this protein is UPF0306 protein YhbP.